We begin with the raw amino-acid sequence, 387 residues long: Transcription termination/antitermination protein NusA (387 aa).

In terms of domain architecture, S1 motif spans 145 to 209; sequence GQVLTGVVTR…AKGPSLLVSR (65 aa). A KH domain is found at 312–379; the sequence is AKKARVKVTK…ARERKAREEF (68 aa).

Belongs to the NusA family. Monomer. Binds directly to the core enzyme of the DNA-dependent RNA polymerase and to nascent RNA.

It is found in the cytoplasm. Participates in both transcription termination and antitermination. The protein is Transcription termination/antitermination protein NusA of Thermus thermophilus (strain ATCC 27634 / DSM 579 / HB8).